A 183-amino-acid chain; its full sequence is Ribosome-recycling factor (183 aa).

The protein belongs to the RRF family.

The protein localises to the cytoplasm. Responsible for the release of ribosomes from messenger RNA at the termination of protein biosynthesis. May increase the efficiency of translation by recycling ribosomes from one round of translation to another. In Bifidobacterium longum subsp. infantis (strain ATCC 15697 / DSM 20088 / JCM 1222 / NCTC 11817 / S12), this protein is Ribosome-recycling factor.